The sequence spans 388 residues: Adenosine deaminase-like protein (388 aa).

Basic residues predominate over residues 1–13 (MPNNSKHKKKQQR). A disordered region spans residues 1–34 (MPNNSKHKKKQQRRQQEAQKKSRAKQIETDKKND). Over residues 14 to 34 (RQQEAQKKSRAKQIETDKKND) the composition is skewed to basic and acidic residues. Positions 65 and 67 each coordinate Zn(2+). Residues histidine 67, histidine 114, 146–149 (TSPK), aspartate 186, and glycine 218 each bind N(6)-methyl-AMP. Histidine 245 is a binding site for Zn(2+). 3 residues coordinate N(6)-methyl-AMP: glutamate 248, aspartate 326, and aspartate 327. Glutamate 248 serves as the catalytic Proton donor. Residue aspartate 326 coordinates Zn(2+).

The protein belongs to the metallo-dependent hydrolases superfamily. Adenosine and AMP deaminases family. Monomer. Requires Zn(2+) as cofactor.

The enzyme catalyses N(6)-methyl-AMP + H2O + H(+) = IMP + methylamine. Functionally, catalyzes the hydrolysis of the free cytosolic methylated adenosine nucleotide N(6)-methyl-AMP (N6-mAMP) to produce inositol monophosphate (IMP) and methylamine. Is required for the catabolism of cytosolic N6-mAMP, which is derived from the degradation of mRNA containing N6-methylated adenine (m6A). This Caenorhabditis elegans protein is Adenosine deaminase-like protein.